The chain runs to 141 residues: Guanyl-specific ribonuclease Sa3 (141 aa).

Residues 1–36 (MRIPPRLVALAGAAAVAATLIAGPVAAAAPASHAVA) constitute a signal peptide (or 43). A disulfide bond links cysteine 52 and cysteine 141. Glutamate 99 (proton acceptor) is an active-site residue. Histidine 130 acts as the Proton donor in catalysis.

It belongs to the ribonuclease N1/T1 family.

The protein resides in the secreted. It catalyses the reaction [RNA] containing guanosine + H2O = an [RNA fragment]-3'-guanosine-3'-phosphate + a 5'-hydroxy-ribonucleotide-3'-[RNA fragment].. The polypeptide is Guanyl-specific ribonuclease Sa3 (rnaSA3) (Kitasatospora aureofaciens (Streptomyces aureofaciens)).